Reading from the N-terminus, the 391-residue chain is Sulfate adenylyltransferase (391 aa).

Belongs to the sulfate adenylyltransferase family.

It catalyses the reaction sulfate + ATP + H(+) = adenosine 5'-phosphosulfate + diphosphate. It functions in the pathway sulfur metabolism; hydrogen sulfide biosynthesis; sulfite from sulfate: step 1/3. In Lactiplantibacillus plantarum (strain ATCC BAA-793 / NCIMB 8826 / WCFS1) (Lactobacillus plantarum), this protein is Sulfate adenylyltransferase.